Reading from the N-terminus, the 257-residue chain is Gene 3 protein (257 aa).

Over residues 163–176 (STENLLGQTQSSTH) the composition is skewed to polar residues. The tract at residues 163–257 (STENLLGQTQ…SDSSVSSVFF (95 aa)) is disordered. The segment covering 214-240 (SIREETVSGMARAREECNSPSEHDRLT) has biased composition (basic and acidic residues).

The chain is Gene 3 protein from Equine herpesvirus 1 (strain Ab4p) (EHV-1).